The chain runs to 236 residues: uncharacterized protein (236 aa).

Positions glutamine 4–tyrosine 236 constitute a GP-PDE domain.

The protein to glycerophosphoryl diester phosphodiesterases (EC 3.1.4.46). It to M.genitalium MG293.

This is an uncharacterized protein from Mycoplasma genitalium (strain ATCC 33530 / DSM 19775 / NCTC 10195 / G37) (Mycoplasmoides genitalium).